The primary structure comprises 625 residues: Protein LEO1 homolog (625 aa).

2 disordered regions span residues 1–214 and 415–625; these read MVKG…DMVL and EREK…SDED. Acidic residues-rich tracts occupy residues 40–55 and 63–80; these read DEAE…GEAE and EAES…PGES. Composition is skewed to basic and acidic residues over residues 97–113, 121–137, and 182–197; these read SEAR…EHGG, QEVV…KHYE, and EYVR…RSPI. Phosphoserine is present on Ser-203. A compositionally biased stretch (basic and acidic residues) spans 415 to 425; it reads EREKEKREKAE. Positions 415–539 form a coiled coil; the sequence is EREKEKREKA…ETEEEEEEKS (125 aa). Polar residues predominate over residues 426–436; that stretch reads SQNLKASTKLS. Positions 471-491 are enriched in basic and acidic residues; sequence YRSNRGYEEDLEAEAQRERRI. Over residues 492–501 the composition is skewed to basic residues; the sequence is LNAKKSHKGI. Over residues 523 to 537 the composition is skewed to acidic residues; sequence EREESEYETEEEEEE. Positions 538–547 are enriched in basic and acidic residues; sequence KSPARGRGKD. 5 positions are modified to phosphoserine: Ser-548, Ser-570, Ser-600, Ser-605, and Ser-622. Residues 548–561 show a composition bias toward acidic residues; sequence SEDEYEEDAEEDEE.

Belongs to the LEO1 family. In terms of assembly, component of the nuclear PAF1 complex (PAF1C), which consists of VIP2/ELF7/PAF1, VIP3/SKI8/WDR61, VIP4/LEO1, VIP5/RTF1, VIP6/ELF8/CTR9 and CDC73. Interacts with VIP3 and VIP6. As to expression, expressed in roots, shoot apices, stems, cauline leaves, inflorescence apices and flowers.

The protein resides in the nucleus. In terms of biological role, component of the PAF1 complex (PAF1C) which is involved in histone modifications such as methylation on histone H3 'Lys-4' (H3K4me3). Involved in regulation of flowering time. Required for the expression of the flowering repressor and MADS box gene FLC. Involved in the control of seed dormancy and germination. The protein is Protein LEO1 homolog of Arabidopsis thaliana (Mouse-ear cress).